The sequence spans 208 residues: ATP-dependent Clp protease proteolytic subunit (208 aa).

Catalysis depends on serine 101, which acts as the Nucleophile. Histidine 126 is an active-site residue.

It belongs to the peptidase S14 family. Component of the chloroplastic Clp protease core complex.

The protein resides in the plastid. Its subcellular location is the chloroplast stroma. It catalyses the reaction Hydrolysis of proteins to small peptides in the presence of ATP and magnesium. alpha-casein is the usual test substrate. In the absence of ATP, only oligopeptides shorter than five residues are hydrolyzed (such as succinyl-Leu-Tyr-|-NHMec, and Leu-Tyr-Leu-|-Tyr-Trp, in which cleavage of the -Tyr-|-Leu- and -Tyr-|-Trp bonds also occurs).. Cleaves peptides in various proteins in a process that requires ATP hydrolysis. Has a chymotrypsin-like activity. Plays a major role in the degradation of misfolded proteins. This is ATP-dependent Clp protease proteolytic subunit from Nephroselmis olivacea (Green alga).